A 32-amino-acid polypeptide reads, in one-letter code: Hainantoxin F8-35.23 (32 aa).

Expressed by the venom gland.

The protein localises to the secreted. In Cyriopagopus hainanus (Chinese bird spider), this protein is Hainantoxin F8-35.23.